A 349-amino-acid polypeptide reads, in one-letter code: sn-glycerol-3-phosphate import ATP-binding protein UgpC (349 aa).

An ABC transporter domain is found at 4 to 235 (ITLKDVHKTY…PATAFVATFI (232 aa)). 37-44 (GPSGCGKS) lines the ATP pocket.

The protein belongs to the ABC transporter superfamily. sn-glycerol-3-phosphate importer (TC 3.A.1.1.3) family. In terms of assembly, the complex is composed of two ATP-binding proteins (UgpC), two transmembrane proteins (UgpA and UgpE) and a solute-binding protein (UgpB).

It is found in the cell inner membrane. The catalysed reaction is sn-glycerol 3-phosphate(out) + ATP + H2O = sn-glycerol 3-phosphate(in) + ADP + phosphate + H(+). Functionally, part of the ABC transporter complex UgpBAEC involved in sn-glycerol-3-phosphate (G3P) import. Responsible for energy coupling to the transport system. This Rhizobium meliloti (strain 1021) (Ensifer meliloti) protein is sn-glycerol-3-phosphate import ATP-binding protein UgpC.